The chain runs to 459 residues: MIKDPFERLGLDREVLTVSQLNGRARVLLEDVFRSVWVEGEISNLARPASGHMYFTLKDSGAQVRCALFRQNATRVRQALRDGLAVRVRGKVSLFEGRGDYQLILDTVEPAGDGALRLAFEALKEKLGAEGLFSAERKKPLPAHPQRIGIITSPTGAVIRDIISVFGRRAPQVELNLIPTAVQGREAIAQIVRAIRLADSLGFDALILARGGGSLEDLWCFNEEAVARAVAACVTPIVSAVGHETDVSISDFVADVRAPTPSAAAELLAPDNSGLRQRLDGLQRRLLLRMQNRLTHDRLRLESLTRRLRHPGERLRQRAQRLDDLDMRLRRAFMLNLNQRRERLARLDARLAAQHPGRNLKLLNQRLDSLAERLPRAMREVLKDRRQRFQAQLQTLQVVSPLATLARGYSILLDEQGQAIRSAEQTRNGQRLTARLNEGELLVRVEDNHLTPVTLSLLD.

This sequence belongs to the XseA family. In terms of assembly, heterooligomer composed of large and small subunits.

It localises to the cytoplasm. It catalyses the reaction Exonucleolytic cleavage in either 5'- to 3'- or 3'- to 5'-direction to yield nucleoside 5'-phosphates.. Its function is as follows. Bidirectionally degrades single-stranded DNA into large acid-insoluble oligonucleotides, which are then degraded further into small acid-soluble oligonucleotides. This is Exodeoxyribonuclease 7 large subunit from Pseudomonas putida (strain ATCC 47054 / DSM 6125 / CFBP 8728 / NCIMB 11950 / KT2440).